The following is a 278-amino-acid chain: 4-deoxy-L-threo-5-hexosulose-uronate ketol-isomerase (278 aa).

Residues H196, H198, E203, and H245 each contribute to the Zn(2+) site.

The protein belongs to the KduI family. It depends on Zn(2+) as a cofactor.

It carries out the reaction 5-dehydro-4-deoxy-D-glucuronate = 3-deoxy-D-glycero-2,5-hexodiulosonate. The protein operates within glycan metabolism; pectin degradation; 2-dehydro-3-deoxy-D-gluconate from pectin: step 4/5. Its function is as follows. Catalyzes the isomerization of 5-dehydro-4-deoxy-D-glucuronate to 3-deoxy-D-glycero-2,5-hexodiulosonate. In Yersinia enterocolitica serotype O:8 / biotype 1B (strain NCTC 13174 / 8081), this protein is 4-deoxy-L-threo-5-hexosulose-uronate ketol-isomerase.